An 857-amino-acid polypeptide reads, in one-letter code: Phosphoenolpyruvate carboxylase (857 aa).

Catalysis depends on residues histidine 144 and lysine 530.

Belongs to the PEPCase type 1 family. In terms of assembly, homotetramer. It depends on Mg(2+) as a cofactor. In terms of processing, the N-terminus is blocked.

It carries out the reaction oxaloacetate + phosphate = phosphoenolpyruvate + hydrogencarbonate. Functionally, forms oxaloacetate, a four-carbon dicarboxylic acid source for the tricarboxylic acid cycle. The chain is Phosphoenolpyruvate carboxylase (ppc) from Thermus sp. (strain 71).